A 146-amino-acid polypeptide reads, in one-letter code: Transcriptional regulator MraZ (146 aa).

2 SpoVT-AbrB domains span residues 7–54 (NATN…GLDL) and 83–126 (GVFV…QPEA).

The protein belongs to the MraZ family. As to quaternary structure, forms oligomers.

It is found in the cytoplasm. The protein resides in the nucleoid. The protein is Transcriptional regulator MraZ of Rhizobium rhizogenes (strain K84 / ATCC BAA-868) (Agrobacterium radiobacter).